Reading from the N-terminus, the 559-residue chain is Nucleolar protein 12 (559 aa).

Residues Ala24–His194 form a disordered region. Over residues Gln44–Leu56 the composition is skewed to basic and acidic residues. The segment covering Glu57 to Asp110 has biased composition (acidic residues). Residues Asn141–Val180 show a composition bias toward basic and acidic residues. 2 RRM domains span residues Arg211 to His320 and Arg328 to Asp432. Residues Arg429 to Asn559 form a disordered region. Basic and acidic residues-rich tracts occupy residues Glu516–Gln532 and Arg550–Asn559.

The protein belongs to the RRM RBM34 family.

The protein resides in the nucleus. The protein localises to the nucleolus. In terms of biological role, involved in pre-25S rRNA processing. In Gibberella zeae (strain ATCC MYA-4620 / CBS 123657 / FGSC 9075 / NRRL 31084 / PH-1) (Wheat head blight fungus), this protein is Nucleolar protein 12 (NOP12).